Reading from the N-terminus, the 31-residue chain is MSDIN-like toxin proprotein 4 (31 aa).

A propeptide spanning residues 1 to 10 (MSDINGTRLP) is cleaved from the precursor. Positions 11–16 (WLATCP) form a cross-link, cyclopeptide (Trp-Pro). Residues 17 to 31 (CVGEDVNPTLSRGER) constitute a propeptide that is removed on maturation.

Belongs to the MSDIN fungal toxin family. Post-translationally, processed by the macrocyclase-peptidase enzyme POPB to yield a toxic cyclic hexapeptide. POPB first removes 10 residues from the N-terminus. Conformational trapping of the remaining peptide forces the enzyme to release this intermediate rather than proceed to macrocyclization. The enzyme rebinds the remaining peptide in a different conformation and catalyzes macrocyclization of the N-terminal 6 residues.

In terms of biological role, probable toxin that belongs to the MSDIN-like toxin family responsible for a large number of food poisoning cases and deaths. The polypeptide is MSDIN-like toxin proprotein 4 (Amanita phalloides (Death cap)).